The sequence spans 456 residues: MTQNENPSAQSGAKPEDKARPAKALQGVKGMNDMLPADAPLWEHFENAARAMLRAYGYQQIRTPIVEHTQLFVRGIGEVTDIVEKEMYSFTDALNGEQLTLRPEGTAAAVRATIEHNLLYDGPKRLWYTGPMFRHERPQRGRYRQFHQLGAEALGFAGPDVDAEIILMCQRLWDDLGLTGVRLEINSLGQAHERAAHREELIKYLEGFKDILDEDGKRRLYTNPLRVLDTKNPALQEMAANAPKLIDFLGEESLAHFEGVQRLLKANNIPYKINPRLVRGLDYYNLTVFEWITDKLGAQGTIAGGGRYDPLIAQMGGKAAPACGWAMGIERIIELIREEGVVPDAVGCDVYLVHQGEAAQQQATVAAERLRDAGLDVVLHATPDGKSGSFKSQMKRADASGAAYAVIIGEDEVAAGVVQVKELRQGAQAEGGGQQAQVPAENLVDYLIDAMVGASE.

Residues 1-11 show a composition bias toward polar residues; the sequence is MTQNENPSAQS. Residues 1-22 form a disordered region; the sequence is MTQNENPSAQSGAKPEDKARPA.

It belongs to the class-II aminoacyl-tRNA synthetase family. In terms of assembly, homodimer.

Its subcellular location is the cytoplasm. It catalyses the reaction tRNA(His) + L-histidine + ATP = L-histidyl-tRNA(His) + AMP + diphosphate + H(+). This Cupriavidus pinatubonensis (strain JMP 134 / LMG 1197) (Cupriavidus necator (strain JMP 134)) protein is Histidine--tRNA ligase.